The sequence spans 95 residues: Small ribosomal subunit protein uS19 (95 aa).

Residues 76-95 (PTRRFGGHADKKAKKGELKK) form a disordered region. The span at 82-95 (GHADKKAKKGELKK) shows a compositional bias: basic and acidic residues.

Belongs to the universal ribosomal protein uS19 family.

Its function is as follows. Protein S19 forms a complex with S13 that binds strongly to the 16S ribosomal RNA. This Thermotoga maritima (strain ATCC 43589 / DSM 3109 / JCM 10099 / NBRC 100826 / MSB8) protein is Small ribosomal subunit protein uS19 (rpsS).